The primary structure comprises 290 residues: Protoheme IX farnesyltransferase (290 aa).

The next 9 membrane-spanning stretches (helical) occupy residues leucine 8–alanine 28, leucine 36–valine 56, isoleucine 81–leucine 101, leucine 108–tyrosine 128, valine 133–alanine 153, valine 163–phenylalanine 183, isoleucine 209–threonine 229, glycine 230–valine 247, and leucine 270–phenylalanine 290.

It belongs to the UbiA prenyltransferase family. Protoheme IX farnesyltransferase subfamily.

It is found in the cell inner membrane. The catalysed reaction is heme b + (2E,6E)-farnesyl diphosphate + H2O = Fe(II)-heme o + diphosphate. It functions in the pathway porphyrin-containing compound metabolism; heme O biosynthesis; heme O from protoheme: step 1/1. Its function is as follows. Converts heme B (protoheme IX) to heme O by substitution of the vinyl group on carbon 2 of heme B porphyrin ring with a hydroxyethyl farnesyl side group. In Aliivibrio salmonicida (strain LFI1238) (Vibrio salmonicida (strain LFI1238)), this protein is Protoheme IX farnesyltransferase.